The following is a 573-amino-acid chain: DNA ligase (573 aa).

Position 248 (glutamate 248) interacts with ATP. Lysine 250 (N6-AMP-lysine intermediate) is an active-site residue. Arginine 255, arginine 270, glutamate 299, phenylalanine 340, arginine 432, and lysine 438 together coordinate ATP.

It belongs to the ATP-dependent DNA ligase family. Mg(2+) serves as cofactor.

The catalysed reaction is ATP + (deoxyribonucleotide)n-3'-hydroxyl + 5'-phospho-(deoxyribonucleotide)m = (deoxyribonucleotide)n+m + AMP + diphosphate.. DNA ligase that seals nicks in double-stranded DNA during DNA replication, DNA recombination and DNA repair. The protein is DNA ligase of Methanocaldococcus jannaschii (strain ATCC 43067 / DSM 2661 / JAL-1 / JCM 10045 / NBRC 100440) (Methanococcus jannaschii).